The sequence spans 352 residues: Lipoyl synthase (352 aa).

Positions 1–21 (MTSVDTPTPHGGTPAPAPATA) are disordered. The [4Fe-4S] cluster site is built by Cys-71, Cys-76, Cys-82, Cys-97, Cys-101, Cys-104, and Ser-308. The Radical SAM core domain occupies 83 to 297 (WEDREATFLI…SRVAEEIGFA (215 aa)).

It belongs to the radical SAM superfamily. Lipoyl synthase family. The cofactor is [4Fe-4S] cluster.

Its subcellular location is the cytoplasm. It carries out the reaction [[Fe-S] cluster scaffold protein carrying a second [4Fe-4S](2+) cluster] + N(6)-octanoyl-L-lysyl-[protein] + 2 oxidized [2Fe-2S]-[ferredoxin] + 2 S-adenosyl-L-methionine + 4 H(+) = [[Fe-S] cluster scaffold protein] + N(6)-[(R)-dihydrolipoyl]-L-lysyl-[protein] + 4 Fe(3+) + 2 hydrogen sulfide + 2 5'-deoxyadenosine + 2 L-methionine + 2 reduced [2Fe-2S]-[ferredoxin]. The protein operates within protein modification; protein lipoylation via endogenous pathway; protein N(6)-(lipoyl)lysine from octanoyl-[acyl-carrier-protein]: step 2/2. In terms of biological role, catalyzes the radical-mediated insertion of two sulfur atoms into the C-6 and C-8 positions of the octanoyl moiety bound to the lipoyl domains of lipoate-dependent enzymes, thereby converting the octanoylated domains into lipoylated derivatives. The protein is Lipoyl synthase of Nocardia farcinica (strain IFM 10152).